The primary structure comprises 1690 residues: Lysine-specific demethylase 5A (1690 aa).

The JmjN domain maps to 19–60; it reads CPVFEPSWEEFTDPLSFIGRIRPLAEKTGICKIRPPKDWQPP. Residues 84–174 enclose the ARID domain; sequence TRVRLDFLDQ…ILYPYELFQS (91 aa). A Glycyl lysine isopeptide (Lys-Gly) (interchain with G-Cter in SUMO2) cross-link involves residue Lys-191. Position 204 is a phosphoserine (Ser-204). The PHD-type 1 zinc finger occupies 293-343; the sequence is LYVCMFCGRGNNEDKLLLCDGCDDSYHTFCLIPPLPDVPKGDWRCPKCVAE. 2-oxoglutarate is bound at residue Tyr-409. Residues 419-423 carry the GSGFP motif motif; it reads GSGFP. The 167-residue stretch at 437–603 folds into the JmjC domain; the sequence is EYALSGWNLN…IGRQCVNHYR (167 aa). Residues His-483 and Glu-485 each contribute to the Fe cation site. Residues Ser-491, Asn-493, and Lys-501 each contribute to the 2-oxoglutarate site. Fe cation is bound at residue His-571. A C5HC2 zinc finger spans residues 676–728; that stretch reads CSACRTTCFLSALTCSCNPERLVCLYHPTDLCPCPMQKKCLRYRYPLEDLPSL. Residue Lys-1007 forms a Glycyl lysine isopeptide (Lys-Gly) (interchain with G-Cter in SUMO2) linkage. Position 1111 is a phosphoserine (Ser-1111). The segment at 1161-1218 adopts a PHD-type 2 zinc-finger fold; sequence VKFCICRKTASGFMLQCELCKDWFHNSCVPLPKSSSQKKGSSWQAKEVKFLCPLCMRS. Disordered stretches follow at residues 1327–1348 and 1407–1433; these read SVSSSPRQTMDYDDEETDSDED and KSCSQGSSTPRKQPRKSPLVPRSLEPP. A phosphoserine mark is found at Ser-1330 and Ser-1331. The segment covering 1337-1348 has biased composition (acidic residues); it reads DYDDEETDSDED. Thr-1343 is modified (phosphothreonine). Residue Ser-1345 is modified to Phosphoserine. Residues Ser-1438 and Ser-1488 each carry the phosphoserine modification. Composition is skewed to basic and acidic residues over residues 1490-1503 and 1520-1530; these read EEKPLKVKGKDSSE and GKQKSKELKKM. Disordered regions lie at residues 1490-1509 and 1516-1543; these read EEKPLKVKGKDSSEKKRKRK and LFGEGKQKSKELKKMDKPRKKKLKLGAD. Residue Tyr-1595 is modified to Phosphotyrosine. 2 positions are modified to phosphoserine: Ser-1598 and Ser-1603. The PHD-type 3 zinc-finger motif lies at 1607 to 1661; sequence NAVCAAQNCQRPCKDKVDWVQCDGGCDEWFHQVCVGVSPEMAENEDYICINCAKK. The segment at 1623 to 1690 is interaction with LMO2; it reads VDWVQCDGGC…LPMEDLKETS (68 aa). Ser-1666 carries the phosphoserine modification.

This sequence belongs to the JARID1 histone demethylase family. As to quaternary structure, interacts with SUZ12; the interaction is direct. Interacts with the viral protein-binding domain of RB1. Interacts with ESR1, MYC, MYCN and LMO2. Interacts with HDAC1; this interaction impairs histone deacetylation by HDAC1. Interacts with BMAL1 and CLOCK. Interacts (via PHD-type 1 zinc finger) with histone H3 unmodified at 'Lys-4' and (via PHD-type 3 zinc finger) with histone H3 di- and trimethylated at 'Lys-4'. The cofactor is Fe(2+).

It localises to the nucleus. Its subcellular location is the nucleolus. The catalysed reaction is N(6),N(6),N(6)-trimethyl-L-lysyl(4)-[histone H3] + 3 2-oxoglutarate + 3 O2 = L-lysyl(4)-[histone H3] + 3 formaldehyde + 3 succinate + 3 CO2. With respect to regulation, the inhibitors KDOAM-25, CPI-455 and others inhibits its demethylase activity, resulting to cell growth arrest in cancer cells. Functionally, histone demethylase that specifically demethylates 'Lys-4' of histone H3, thereby playing a central role in histone code. Does not demethylate histone H3 'Lys-9', H3 'Lys-27', H3 'Lys-36', H3 'Lys-79' or H4 'Lys-20'. Demethylates trimethylated and dimethylated but not monomethylated H3 'Lys-4'. Regulates specific gene transcription through DNA-binding on 5'-CCGCCC-3' motif. May stimulate transcription mediated by nuclear receptors. Involved in transcriptional regulation of Hox proteins during cell differentiation. May participate in transcriptional repression of cytokines such as CXCL12. Plays a role in the regulation of the circadian rhythm and in maintaining the normal periodicity of the circadian clock. In a histone demethylase-independent manner, acts as a coactivator of the CLOCK-BMAL1-mediated transcriptional activation of PER1/2 and other clock-controlled genes and increases histone acetylation at PER1/2 promoters by inhibiting the activity of HDAC1. Seems to act as a transcriptional corepressor for some genes such as MT1F and to favor the proliferation of cancer cells. This is Lysine-specific demethylase 5A from Homo sapiens (Human).